Here is a 1132-residue protein sequence, read N- to C-terminus: BTB/POZ domain-containing protein 7 (1132 aa).

Polar residues predominate over residues 1-10; the sequence is MGANASNYPH. The tract at residues 1 to 24 is disordered; it reads MGANASNYPHSCSPRVGGNSQAQQ. A lipid anchor (N-myristoyl glycine) is attached at Gly2. 2 BTB domains span residues 142–211 and 247–341; these read TDVD…GMED and YDVV…DLSV. Residues 413–479 form the BACK domain; that stretch reads YGSKWVHRQA…WGEHQLMKRI (67 aa). Position 722 is a phosphoserine (Ser722). Disordered stretches follow at residues 897-1019 and 1035-1132; these read LSQS…HLHR and QRSD…KSAL. The segment covering 918 to 927 has biased composition (basic residues); that stretch reads RHTHTSRKKH. 4 stretches are compositionally biased toward basic and acidic residues: residues 928 to 939, 1000 to 1019, 1083 to 1093, and 1105 to 1114; these read TLEQKTDTRENP, KKQEEARREYPLSPDGHLHR, PEERSGRRLAD, and TDLEREDSIS. Ser1012 is modified (phosphoserine).

The protein resides in the nucleus. Acts as a mediator of epithelial dynamics and organ branching by promoting cleft progression. Induced following accumulation of fibronectin in forming clefts, leading to local expression of the cell-scattering SNAIL2 and suppression of E-cadherin levels, thereby altering cell morphology and reducing cell-cell adhesion. This stimulates cell separation at the base of forming clefts by local, dynamic intercellular gap formation and promotes cleft progression. The protein is BTB/POZ domain-containing protein 7 (BTBD7) of Homo sapiens (Human).